The primary structure comprises 189 residues: GMP synthase [glutamine-hydrolyzing] subunit A (189 aa).

One can recognise a Glutamine amidotransferase type-1 domain in the interval 1-189 (MIVILNNGGQ…CKKCGFEFEE (189 aa)). The Nucleophile role is filled by cysteine 76. Residues histidine 163 and glutamate 165 contribute to the active site.

Heterodimer composed of a glutamine amidotransferase subunit (A) and a GMP-binding subunit (B).

The enzyme catalyses XMP + L-glutamine + ATP + H2O = GMP + L-glutamate + AMP + diphosphate + 2 H(+). It participates in purine metabolism; GMP biosynthesis; GMP from XMP (L-Gln route): step 1/1. In terms of biological role, catalyzes the synthesis of GMP from XMP. The chain is GMP synthase [glutamine-hydrolyzing] subunit A from Methanococcus maripaludis (strain C6 / ATCC BAA-1332).